Consider the following 309-residue polypeptide: tRNA pseudouridine synthase B (309 aa).

D51 functions as the Nucleophile in the catalytic mechanism.

It belongs to the pseudouridine synthase TruB family. Type 1 subfamily.

The catalysed reaction is uridine(55) in tRNA = pseudouridine(55) in tRNA. Responsible for synthesis of pseudouridine from uracil-55 in the psi GC loop of transfer RNAs. The polypeptide is tRNA pseudouridine synthase B (Coxiella burnetii (strain Dugway 5J108-111)).